A 301-amino-acid polypeptide reads, in one-letter code: Ribosomal RNA small subunit methyltransferase A (301 aa).

The S-adenosyl-L-methionine site is built by Asn-29, Leu-31, Gly-56, Glu-77, Asp-102, and Asn-127.

This sequence belongs to the class I-like SAM-binding methyltransferase superfamily. rRNA adenine N(6)-methyltransferase family. RsmA subfamily.

The protein resides in the cytoplasm. It carries out the reaction adenosine(1518)/adenosine(1519) in 16S rRNA + 4 S-adenosyl-L-methionine = N(6)-dimethyladenosine(1518)/N(6)-dimethyladenosine(1519) in 16S rRNA + 4 S-adenosyl-L-homocysteine + 4 H(+). Functionally, specifically dimethylates two adjacent adenosines (A1518 and A1519) in the loop of a conserved hairpin near the 3'-end of 16S rRNA in the 30S particle. May play a critical role in biogenesis of 30S subunits. The polypeptide is Ribosomal RNA small subunit methyltransferase A (Halothermothrix orenii (strain H 168 / OCM 544 / DSM 9562)).